Consider the following 168-residue polypeptide: Iron-sulfur cluster assembly enzyme ISCU (168 aa).

A mitochondrion-targeting transit peptide spans 1-35 (MAAATGAGRLRRAASALLLRSPRLPARELSAPARL). Ser-15 bears the Phosphoserine mark. Residue Cys-70 is the Cysteine persulfide intermediate of the active site. Cys-70 bears the Cysteine persulfide mark. Positions 72, 96, and 139 each coordinate Zn(2+). Cys-139 acts as the Cysteine persulfide intermediate in catalysis. The residue at position 139 (Cys-139) is a Cysteine persulfide.

It belongs to the NifU family. In terms of assembly, homodimer; Tyr-36-mediated dimerization of two iron- and sulfide-containing ISCU subunit bind to the cysteine desulfurase complex. Component of the mitochondrial core iron-sulfur cluster (ISC) complex composed of NFS1, LYRM4, NDUFAB1, ISCU, FXN, and FDX2; this complex is a heterohexamer containing two copies of each monomer. Interacts (D-state) with NFS1 (homodimer form); each monomer interacts with the C-terminal regions of each NFS1 monomer. Interacts (monomer form) with FXN (via ferrous form); the interaction is possible when both are bound to the dimeric form of the cysteine desulfurase complex (NFS1:LYRM4) and enhances FXN interaction to the dimeric form of the cysteine desulfurase complex (NFS1:LYRM4). Interacts with GLRX5. Interacts (D-state) with HSPA9. Interacts (S-state) with HSCB; this interaction stimulates the ATPase activity of HSPA9. Component of a complex composed of FXN, NFS1, LYRM4 and ISCU. Post-translationally, cysteine persulfide is reduced by thiol-containing molecules such as glutathione and L-cysteine. Phosphorylation at Ser-15 is required for ISCU protein stabilization in the cytosol, whereas dephosphorylation of Ser-15, due to the inhibition of mTORC1 (mammalian target of rapamycin complex 1) complex, leads to degradation of the precursor form and ultimately to a decrease in the mitochondrial mature form.

The protein resides in the mitochondrion. Functionally, mitochondrial scaffold protein, of the core iron-sulfur cluster (ISC) assembly complex, that provides the structural architecture on which the [2Fe-2S] clusters are assembled. The core iron-sulfur cluster (ISC) assembly complex is involved in the de novo synthesis of a [2Fe-2S] cluster, the first step of the mitochondrial iron-sulfur protein biogenesis. This process is initiated by the cysteine desulfurase complex (NFS1:LYRM4:NDUFAB1) that produces persulfide which is delivered on the scaffold protein ISCU in a FXN-dependent manner. Then this complex is stabilized by FDX2 which provides reducing equivalents to accomplish the [2Fe-2S] cluster assembly. Finally, the [2Fe-2S] cluster is transferred from ISCU to chaperone proteins, including HSCB, HSPA9 and GLRX5. Exists as two slow interchanging conformational states, a structured (S) and disordered (D) form. May modulate NFS1 desulfurase activity in a zinc-dependent manner. Modulates the interaction between FXN and the cysteine desulfurase complex. This chain is Iron-sulfur cluster assembly enzyme ISCU, found in Mus musculus (Mouse).